A 428-amino-acid chain; its full sequence is Enolase (428 aa).

Gln163 is a (2R)-2-phosphoglycerate binding site. Glu205 acts as the Proton donor in catalysis. Asp242, Glu286, and Asp313 together coordinate Mg(2+). The (2R)-2-phosphoglycerate site is built by Lys338, Arg367, Ser368, and Lys389. Lys338 serves as the catalytic Proton acceptor.

This sequence belongs to the enolase family. The cofactor is Mg(2+).

The protein resides in the cytoplasm. Its subcellular location is the secreted. The protein localises to the cell surface. It carries out the reaction (2R)-2-phosphoglycerate = phosphoenolpyruvate + H2O. It participates in carbohydrate degradation; glycolysis; pyruvate from D-glyceraldehyde 3-phosphate: step 4/5. Its function is as follows. Catalyzes the reversible conversion of 2-phosphoglycerate (2-PG) into phosphoenolpyruvate (PEP). It is essential for the degradation of carbohydrates via glycolysis. The sequence is that of Enolase from Verminephrobacter eiseniae (strain EF01-2).